The following is a 328-amino-acid chain: E3 ubiquitin-protein ligase RING1-like (328 aa).

Position 2 is an N-acetylserine (Ser-2). The segment at 216 to 257 adopts an RING-type; atypical zinc-finger fold; the sequence is CAVCMDEFEDGSDVKQMPCKHVFHQDCLLPWLELHNSCPVCR. The tract at residues 264–328 is disordered; that stretch reads DPDYENRSQG…NLETRGEDLD (65 aa). Residues 306–319 show a composition bias toward gly residues; sequence SGSGSGAPGTGGGN.

Auto-ubiquitinated as part of the enzymatic reaction. In terms of tissue distribution, expressed in leaves, roots, trichomes, stipules, and also in anthers and stigma of flowers.

It carries out the reaction S-ubiquitinyl-[E2 ubiquitin-conjugating enzyme]-L-cysteine + [acceptor protein]-L-lysine = [E2 ubiquitin-conjugating enzyme]-L-cysteine + N(6)-ubiquitinyl-[acceptor protein]-L-lysine.. The protein operates within protein modification; protein ubiquitination. Its function is as follows. E3 ubiquitin-protein ligase which accepts ubiquitin from an E2 ubiquitin-conjugating enzyme in the form of a thioester and then directly transfers the ubiquitin to targeted substrates. Promotes polyubiquitination of target proteins. The protein is E3 ubiquitin-protein ligase RING1-like of Arabidopsis thaliana (Mouse-ear cress).